Consider the following 904-residue polypeptide: MICAL-like protein 2 (904 aa).

A Calponin-homology (CH) domain is found at 1–107 (MAAIRALQQW…YVSQYYNYFH (107 aa)). The segment at 1–260 (MAAIRALQQW…KLTGLVPRQP (260 aa)) is forms an intramolecular interaction with the C-terminal coiled coil domain keeping the protein in a closed conformation. Residues Ser-110, Ser-143, and Ser-153 each carry the phosphoserine modification. Residues 117–178 (GVKRASEDSE…GGPPPKTDQA (62 aa)) form a disordered region. Over residues 143–153 (SPAPARKPPLS) the composition is skewed to pro residues. The 63-residue stretch at 186-248 (STCGVCGKHV…TSHLPAAASA (63 aa)) folds into the LIM zinc-binding domain. The residue at position 249 (Ser-249) is a Phosphoserine. The tract at residues 251–722 (KLTGLVPRQP…PANVPALPGE (472 aa)) is disordered. The necessary and sufficient for interaction with actinins stretch occupies residues 261–388 (GAMGVDSRTS…GGAPRVAAPQ (128 aa)). The tract at residues 261 to 697 (GAMGVDSRTS…EARVQSWKEE (437 aa)) is mediates targeting to the cell plasma membrane. Residues 267–277 (SRTSCSPQKAQ) are compositionally biased toward polar residues. Composition is skewed to low complexity over residues 293-314 (NSPARASVPAAPNPAATSATSV) and 349-362 (SSAAPCTAAAASHP). Ser-294 is subject to Phosphoserine. Residues 363 to 374 (AVPPSAPDPRPA) show a composition bias toward pro residues. Low complexity predominate over residues 385 to 400 (AAPQTTLSSSSTSAAT). Residues 408–433 (PSASRTQQARNKFFQTSAVPPGTSLS) show a composition bias toward polar residues. Low complexity predominate over residues 459–480 (ALSALEEAGAPAPGRPSPATAA). A phosphoserine mark is found at Ser-494 and Ser-504. 2 stretches are compositionally biased toward low complexity: residues 520-534 (LSTSSTSQASALPPA) and 542-553 (SSGVGRVGAGSR). Over residues 564–578 (KSTTLTQDMSTSLQE) the composition is skewed to polar residues. A compositionally biased stretch (basic and acidic residues) spans 593–622 (PVDRRSPAERTLKPKEPRALAEPRAGEAPR). A Phosphoserine modification is found at Ser-598. A Phosphothreonine modification is found at Thr-644. Over residues 647–661 (PASPGPSLPARSPSP) the composition is skewed to pro residues. A phosphoserine mark is found at Ser-649, Ser-658, Ser-660, and Ser-726. The segment at 698–807 (EKKPHLQGKP…LMYKSKAQRL (110 aa)) is forms an intramolecular interaction with the N-terminal Calponin-homology and LIM zinc-binding domains-containing region keeping the protein in a closed conformation. The bMERB domain maps to 723-874 (TVTSPVRLHP…EQEEDQMLRD (152 aa)). Residues 735–771 (LSPEEIQRQLQDIERRLDALELRGVELEKRLRAAEGD) are a coiled coil. The interval 807–903 (LEEQQLDIEG…WSPKSKSSPS (97 aa)) is mediates interaction with RAB13 and is required for transition from the closed to the opened conformation.

Interacts with RAB13 (GTP-bound form); competes with RAB8A and is involved in tight junctions assembly. Interacts with RAB8A; competes with RAB13 and is involved in E-cadherin endocytic recycling. Interacts with RAB8B. Interacts (preferentially in opened conformation) with ACTN1 and ACTN4; stimulated by RAB13 activation. Interacts (via calponin-homology (CH) domain) with the filamins FLNA, FLNB and FLNC (via actin-binding domain).

It is found in the cell membrane. Its subcellular location is the cell junction. The protein localises to the tight junction. It localises to the recycling endosome. The protein resides in the cell projection. It is found in the cytoplasm. Its subcellular location is the cytoskeleton. In terms of biological role, effector of small Rab GTPases which is involved in junctional complexes assembly through the regulation of cell adhesion molecules transport to the plasma membrane and actin cytoskeleton reorganization. Regulates the endocytic recycling of occludins, claudins and E-cadherin to the plasma membrane and may thereby regulate the establishment of tight junctions and adherens junctions. In parallel, may regulate actin cytoskeleton reorganization directly through interaction with F-actin or indirectly through actinins and filamins. Most probably involved in the processes of epithelial cell differentiation, cell spreading and neurite outgrowth. Undergoes liquid-liquid phase separation to form tubular recycling endosomes. Plays 2 sequential roles in the biogenesis of tubular recycling endosomes: first organizes phase separation and then the closed form formed by interaction with RAB8A promotes endosomal tubulation. This is MICAL-like protein 2 from Homo sapiens (Human).